Here is a 461-residue protein sequence, read N- to C-terminus: GTPase Der (461 aa).

2 consecutive EngA-type G domains span residues 25–188 and 198–371; these read PVVA…PNVA and RRVA…ASWD. Residues 31 to 38, 78 to 82, 140 to 143, 204 to 211, 251 to 255, and 316 to 319 each bind GTP; these read GRPNVGKS, DTGGW, NKVD, GKPNVGKS, DTAGL, and NKWD. Residues 372–454 form the KH-like domain; it reads TRIATGPLNI…PIRINVRVRE (83 aa).

This sequence belongs to the TRAFAC class TrmE-Era-EngA-EngB-Septin-like GTPase superfamily. EngA (Der) GTPase family. As to quaternary structure, associates with the 50S ribosomal subunit.

Functionally, GTPase that plays an essential role in the late steps of ribosome biogenesis. The protein is GTPase Der of Mycobacterium leprae (strain TN).